The following is a 232-amino-acid chain: 5'-methylthioadenosine/S-adenosylhomocysteine nucleosidase (232 aa).

The active-site Proton acceptor is the glutamate 12. Residues glycine 78, isoleucine 152, and 173-174 (ME) each bind substrate. Aspartate 197 functions as the Proton donor in the catalytic mechanism.

This sequence belongs to the PNP/UDP phosphorylase family. MtnN subfamily. In terms of assembly, homodimer.

The enzyme catalyses S-adenosyl-L-homocysteine + H2O = S-(5-deoxy-D-ribos-5-yl)-L-homocysteine + adenine. The catalysed reaction is S-methyl-5'-thioadenosine + H2O = 5-(methylsulfanyl)-D-ribose + adenine. It catalyses the reaction 5'-deoxyadenosine + H2O = 5-deoxy-D-ribose + adenine. Its pathway is amino-acid biosynthesis; L-methionine biosynthesis via salvage pathway; S-methyl-5-thio-alpha-D-ribose 1-phosphate from S-methyl-5'-thioadenosine (hydrolase route): step 1/2. In terms of biological role, catalyzes the irreversible cleavage of the glycosidic bond in both 5'-methylthioadenosine (MTA) and S-adenosylhomocysteine (SAH/AdoHcy) to adenine and the corresponding thioribose, 5'-methylthioribose and S-ribosylhomocysteine, respectively. Also cleaves 5'-deoxyadenosine, a toxic by-product of radical S-adenosylmethionine (SAM) enzymes, into 5-deoxyribose and adenine. Thus, is required for in vivo function of the radical SAM enzymes biotin synthase and lipoic acid synthase, that are inhibited by 5'-deoxyadenosine accumulation. The protein is 5'-methylthioadenosine/S-adenosylhomocysteine nucleosidase of Shigella boydii serotype 4 (strain Sb227).